The following is a 624-amino-acid chain: Chaperone protein HtpG (624 aa).

Positions 1 to 341 (MAVKQFKAES…SPDLSLNISR (341 aa)) are a; substrate-binding. A b region spans residues 342–550 (ELLQHDRQLK…DGELSIEMEK (209 aa)). The interval 551–624 (VLKMMPDNNN…FANDVASLMK (74 aa)) is c.

This sequence belongs to the heat shock protein 90 family. In terms of assembly, homodimer.

The protein localises to the cytoplasm. Its function is as follows. Molecular chaperone. Has ATPase activity. The chain is Chaperone protein HtpG from Clostridium acetobutylicum (strain ATCC 824 / DSM 792 / JCM 1419 / IAM 19013 / LMG 5710 / NBRC 13948 / NRRL B-527 / VKM B-1787 / 2291 / W).